The sequence spans 219 residues: Ribose-5-phosphate isomerase A (219 aa).

Substrate is bound by residues 28 to 31 (TGST), 81 to 84 (DGAD), and 94 to 97 (KGGG). The active-site Proton acceptor is the E103. K121 is a substrate binding site.

It belongs to the ribose 5-phosphate isomerase family. As to quaternary structure, homodimer.

The enzyme catalyses aldehydo-D-ribose 5-phosphate = D-ribulose 5-phosphate. The protein operates within carbohydrate degradation; pentose phosphate pathway; D-ribose 5-phosphate from D-ribulose 5-phosphate (non-oxidative stage): step 1/1. Catalyzes the reversible conversion of ribose-5-phosphate to ribulose 5-phosphate. The chain is Ribose-5-phosphate isomerase A from Escherichia fergusonii (strain ATCC 35469 / DSM 13698 / CCUG 18766 / IAM 14443 / JCM 21226 / LMG 7866 / NBRC 102419 / NCTC 12128 / CDC 0568-73).